The chain runs to 697 residues: Elongation factor G 2 (697 aa).

The 276-residue stretch at 5–280 (SLYRNIGIFA…AVVDYLPSPT (276 aa)) folds into the tr-type G domain. Residues 14 to 21 (AHVDAGKT), 78 to 82 (DTPGH), and 132 to 135 (NKLD) each bind GTP.

The protein belongs to the TRAFAC class translation factor GTPase superfamily. Classic translation factor GTPase family. EF-G/EF-2 subfamily.

The protein resides in the cytoplasm. In terms of biological role, catalyzes the GTP-dependent ribosomal translocation step during translation elongation. During this step, the ribosome changes from the pre-translocational (PRE) to the post-translocational (POST) state as the newly formed A-site-bound peptidyl-tRNA and P-site-bound deacylated tRNA move to the P and E sites, respectively. Catalyzes the coordinated movement of the two tRNA molecules, the mRNA and conformational changes in the ribosome. The polypeptide is Elongation factor G 2 (Saccharophagus degradans (strain 2-40 / ATCC 43961 / DSM 17024)).